A 130-amino-acid polypeptide reads, in one-letter code: Small ribosomal subunit protein uS9 (130 aa).

Belongs to the universal ribosomal protein uS9 family.

In Variovorax paradoxus (strain S110), this protein is Small ribosomal subunit protein uS9.